We begin with the raw amino-acid sequence, 845 residues long: ATPase morc-1 (845 aa).

ATP is bound by residues asparagine 43, 88 to 90 (SAK), and 97 to 103 (RYGNGLK). Asparagine 43 provides a ligand contact to Mg(2+). The stretch at 284-311 (AAYNKILDEKNETVKKCEEEKALVMSEI) forms a coiled coil. Lysine 422 is an ATP binding site. Disordered stretches follow at residues 566–590 (LPQKRLTNSAPSSSDSQNSIRSASS) and 628–739 (KMEP…GKAV). Low complexity predominate over residues 574-590 (SAPSSSDSQNSIRSASS). A compositionally biased stretch (basic and acidic residues) spans 637–646 (HDSHIAEVQR).

Predominantly forms monomers and dimers, but multimerizes to form trimers and tetramers upon DNA binding. Expressed in germline and somatic cells.

The protein resides in the nucleus. Its subcellular location is the nuclear body. The catalysed reaction is ATP + H2O = ADP + phosphate + H(+). Binds non-specifically to DNA and forms static foci which grow by recruiting other morc-1 molecules, and thereby stimulates conformational changes and compaction of DNA, which appears to be enhanced by ATP-binding, but does not require ATP activity. Preferentially binds to long DNAs. Compacts and entraps segments of DNA by sequentially forming loops along the DNA, beginning at the free ends of single- and double-tethered DNA. Does not extrude the DNA loops on compacted double-tethered DNA. Involved in gene silencing. Plays a role in germline RNA interference (RNAi), and in particular, the silencing of endogenous small interfering RNA (endo-siRNA) target genes. May play a role in heterochromatin localization and condensation, and the siRNAi-directed trimethylation of 'Lys-9' of histone H3 in hermaphrodite X chromosomes. Promotes transgenerational epigenetic inheritance and germline immortality. The protein is ATPase morc-1 of Caenorhabditis elegans.